The sequence spans 39 residues: L-amino-acid oxidase (39 aa).

It belongs to the flavin monoamine oxidase family. FIG1 subfamily. Monomer. This is in contrast with most of its orthologs, that are non-covalently linked homodimers. It depends on FAD as a cofactor. N-glycosylated. Expressed by the venom gland.

It is found in the secreted. The enzyme catalyses an L-alpha-amino acid + O2 + H2O = a 2-oxocarboxylate + H2O2 + NH4(+). It carries out the reaction L-leucine + O2 + H2O = 4-methyl-2-oxopentanoate + H2O2 + NH4(+). Its function is as follows. Catalyzes an oxidative deamination of predominantly hydrophobic and aromatic L-amino acids, thus producing hydrogen peroxide that may contribute to the diverse toxic effects of this enzyme. Shows activity on L-Leu. Exhibits diverse biological activities, such as hemorrhage, hemolysis, edema, apoptosis of vascular endothelial cells or tumor cell lines, and antiparasitic activities, as well as regulation of platelet aggregation. Effects of snake L-amino oxidases on platelets are controversial, since they either induce aggregation or inhibit agonist-induced aggregation. These different effects are probably due to different experimental conditions. In addition, this protein inhibits dose-dependently the growth of Gram-positive, Gram-negative bacteria and yeast, probably by the generation of hydrogen peroxide. This is L-amino-acid oxidase from Bothrops marajoensis (Marajo lancehead).